A 3432-amino-acid polypeptide reads, in one-letter code: Hybrid signal transduction histidine kinase G (3432 aa).

3 stretches are compositionally biased toward low complexity: residues H44–N68, S76–N90, and Q126–Q145. 2 disordered regions span residues H44–S109 and D124–N240. A compositionally biased stretch (polar residues) spans T146–G157. 2 stretches are compositionally biased toward low complexity: residues T165–H177 and K187–N238. In terms of domain architecture, Protein kinase spans L263–F792. Residues Y269–F277 and K305 contribute to the ATP site. The segment covering N399–N419 has biased composition (low complexity). 2 disordered regions span residues N399–I426 and F443–L542. Positions F443–L467 are enriched in polar residues. Positions N468–S479 are enriched in low complexity. Residues P480 to I490 are compositionally biased toward polar residues. Low complexity predominate over residues T491–N508. The segment covering S509 to T525 has biased composition (gly residues). The active-site Proton acceptor; for protein kinase activity is D585. The AAA stretch occupies residues G863 to D1121. An ATP-binding site is contributed by G871–T878. Disordered stretches follow at residues N1040 to I1077 and T1261 to D1290. Positions T1261–N1288 are enriched in low complexity. 2 helical membrane-spanning segments follow: residues V1567–L1587 and I1599–F1619. The stretch at S1965–F1998 is one TPR repeat. Disordered stretches follow at residues E2071 to I2095 and G2299 to K2349. Residues S2073–I2095 are compositionally biased toward low complexity. Residues Y2215–N2465 form the GAF domain. One can recognise a Histidine kinase domain in the interval N2491–K2769. H2494 carries the post-translational modification Phosphohistidine; by autocatalysis. Low complexity predominate over residues T2637 to D2648. Disordered stretches follow at residues T2637–L2673, L2785–N2815, L2917–S3030, N3134–Y3160, and N3247–T3281. The segment covering N2649–L2673 has biased composition (acidic residues). Composition is skewed to low complexity over residues N2787–N2815, L2935–N3029, and N3134–N3145. One can recognise a Response regulatory domain in the interval K3305–G3424. D3356 is modified (4-aspartylphosphate).

Belongs to the protein kinase superfamily. Ser/Thr protein kinase family. Activation probably requires transfer of a phosphate group between a histidine in the kinase core (transmitter) domain and an aspartate of the receiver domain.

It is found in the membrane. The enzyme catalyses ATP + protein L-histidine = ADP + protein N-phospho-L-histidine.. It catalyses the reaction L-seryl-[protein] + ATP = O-phospho-L-seryl-[protein] + ADP + H(+). It carries out the reaction L-threonyl-[protein] + ATP = O-phospho-L-threonyl-[protein] + ADP + H(+). Its function is as follows. Acts as a receptor histidine kinase for a signal transduction pathway. This protein undergoes an ATP-dependent autophosphorylation at a conserved histidine residue in the kinase core, and a phosphoryl group is then transferred to a conserved aspartate residue in the receiver domain. In Dictyostelium discoideum (Social amoeba), this protein is Hybrid signal transduction histidine kinase G (dhkG).